Reading from the N-terminus, the 445-residue chain is Adenylosuccinate synthetase (445 aa).

GTP-binding positions include 24-30 and 52-54; these read GDEGKGK and GHT. Catalysis depends on Asp25, which acts as the Proton acceptor. The Mg(2+) site is built by Asp25 and Gly52. IMP contacts are provided by residues 25 to 28, 50 to 53, Thr147, Arg161, Asn238, Thr253, and Arg317; these read DEGK and NAGH. The active-site Proton donor is the His53. 313–319 is a substrate binding site; the sequence is TTTGRRR. GTP is bound by residues Arg319, 345 to 347, and 427 to 429; these read KLD and GVG.

Belongs to the adenylosuccinate synthetase family. As to quaternary structure, homodimer. It depends on Mg(2+) as a cofactor.

The protein localises to the cytoplasm. The enzyme catalyses IMP + L-aspartate + GTP = N(6)-(1,2-dicarboxyethyl)-AMP + GDP + phosphate + 2 H(+). It functions in the pathway purine metabolism; AMP biosynthesis via de novo pathway; AMP from IMP: step 1/2. Plays an important role in the de novo pathway and in the salvage pathway of purine nucleotide biosynthesis. Catalyzes the first committed step in the biosynthesis of AMP from IMP. The chain is Adenylosuccinate synthetase from Malassezia globosa (strain ATCC MYA-4612 / CBS 7966) (Dandruff-associated fungus).